The primary structure comprises 678 residues: NADPH--cytochrome P450 reductase (678 aa).

An N-acetylglycine modification is found at Gly-2. Over 2 to 21 (GDSHVDTGATSTEAVAEEVS) the chain is Lumenal. The helical transmembrane segment at 22–42 (LFSMTDMILLSVLVGFLTYFF) threads the bilayer. The Cytoplasmic portion of the chain corresponds to 43-678 (LFRKKKEEIP…KGRYSLDVWS (636 aa)). Ser-63 carries the post-translational modification Phosphoserine. The 145-residue stretch at 80–224 (IIVFYGSQTG…DFITWREQFW (145 aa)) folds into the Flavodoxin-like domain. FMN-binding positions include 86-91 (SQTGTA), 138-141 (ATYG), 173-182 (LGNKTYEHFN), and Asp-208. The FAD-binding FR-type domain occupies 279 to 521 (KNPFLAAVTT…FVRKSQFRLP (243 aa)). NADP(+) is bound at residue Arg-298. Residues Arg-424, 454-457 (RYYS), 472-474 (CAV), Tyr-478, and 488-491 (GVAT) each bind FAD. Residues Thr-535, 596–597 (SR), 602–606 (KVYVQ), and Asp-639 contribute to the NADP(+) site. Residue Trp-677 participates in FAD binding.

Belongs to the NADPH--cytochrome P450 reductase family. This sequence in the N-terminal section; belongs to the flavodoxin family. It in the C-terminal section; belongs to the flavoprotein pyridine nucleotide cytochrome reductase family. FAD serves as cofactor. It depends on FMN as a cofactor.

The protein localises to the endoplasmic reticulum membrane. It catalyses the reaction 2 oxidized [cytochrome P450] + NADPH = 2 reduced [cytochrome P450] + NADP(+) + H(+). Functionally, this enzyme is required for electron transfer from NADP to cytochrome P450 in microsomes. It can also provide electron transfer to heme oxygenase and cytochrome B5. The chain is NADPH--cytochrome P450 reductase from Cavia porcellus (Guinea pig).